The chain runs to 57 residues: Serine protease inhibitor Kazal-type 1 (57 aa).

A Kazal-like domain is found at 4–57 (LQRQANCNLKVNGCNKIYNPICGSDGITYANECLLCLENKKRQTSILVEKSGPC). 3 disulfide bridges follow: cysteine 10-cysteine 39, cysteine 17-cysteine 36, and cysteine 25-cysteine 57.

The protein resides in the secreted. In terms of biological role, serine protease inhibitor which exhibits anti-trypsin activity. In the pancreas, protects against trypsin-catalyzed premature activation of zymogens. Its function is as follows. In the male reproductive tract, binds to sperm heads where it modulates sperm capacitance by inhibiting calcium uptake and nitrogen oxide (NO) production. This is Serine protease inhibitor Kazal-type 1 (SPINK1) from Canis lupus familiaris (Dog).